The chain runs to 577 residues: Arginine--tRNA ligase (577 aa).

The 'HIGH' region motif lies at 122–132 (PNVAKEMHVGH).

The protein belongs to the class-I aminoacyl-tRNA synthetase family. Monomer.

The protein localises to the cytoplasm. The catalysed reaction is tRNA(Arg) + L-arginine + ATP = L-arginyl-tRNA(Arg) + AMP + diphosphate. The sequence is that of Arginine--tRNA ligase from Escherichia coli O139:H28 (strain E24377A / ETEC).